A 376-amino-acid polypeptide reads, in one-letter code: 23S rRNA (uracil(747)-C(5))-methyltransferase RlmC (376 aa).

[4Fe-4S] cluster-binding residues include Cys3, Cys11, Cys14, and Cys88. Residues Gln213, Phe242, Glu263, and Asn308 each contribute to the S-adenosyl-L-methionine site. Cys335 (nucleophile) is an active-site residue.

Belongs to the class I-like SAM-binding methyltransferase superfamily. RNA M5U methyltransferase family. RlmC subfamily.

It catalyses the reaction uridine(747) in 23S rRNA + S-adenosyl-L-methionine = 5-methyluridine(747) in 23S rRNA + S-adenosyl-L-homocysteine + H(+). Functionally, catalyzes the formation of 5-methyl-uridine at position 747 (m5U747) in 23S rRNA. The protein is 23S rRNA (uracil(747)-C(5))-methyltransferase RlmC of Vibrio vulnificus (strain YJ016).